Reading from the N-terminus, the 254-residue chain is Dihydroorotate dehydrogenase B (NAD(+)), electron transfer subunit (254 aa).

An FAD-binding FR-type domain is found at 1–99 (MLQTEMKVIQ…LGPLGKGFDI (99 aa)). FAD contacts are provided by residues 50–53 (RPIS), 67–69 (LYR), and 74–75 (GT). [2Fe-2S] cluster is bound by residues C218, C223, C226, and C241.

It belongs to the PyrK family. Heterotetramer of 2 PyrK and 2 PyrD type B subunits. Requires [2Fe-2S] cluster as cofactor. The cofactor is FAD.

Its pathway is pyrimidine metabolism; UMP biosynthesis via de novo pathway; orotate from (S)-dihydroorotate (NAD(+) route): step 1/1. In terms of biological role, responsible for channeling the electrons from the oxidation of dihydroorotate from the FMN redox center in the PyrD type B subunit to the ultimate electron acceptor NAD(+). The chain is Dihydroorotate dehydrogenase B (NAD(+)), electron transfer subunit from Listeria welshimeri serovar 6b (strain ATCC 35897 / DSM 20650 / CCUG 15529 / CIP 8149 / NCTC 11857 / SLCC 5334 / V8).